The primary structure comprises 54 residues: Large ribosomal subunit protein bL33B (54 aa).

Belongs to the bacterial ribosomal protein bL33 family.

This is Large ribosomal subunit protein bL33B (rpmG2) from Streptomyces coelicolor (strain ATCC BAA-471 / A3(2) / M145).